Reading from the N-terminus, the 144-residue chain is Effector EagT6 (144 aa).

Homodimer. Two dimers interact with Tse6; this interaction is crucial for Tse6 loading onto VgrG1a.

Plays an essential role in toxin Tse6 delivery to target cells and specifically in the loading of Tse6 onto VgrG1a. This chain is Effector EagT6, found in Pseudomonas aeruginosa (strain ATCC 15692 / DSM 22644 / CIP 104116 / JCM 14847 / LMG 12228 / 1C / PRS 101 / PAO1).